A 316-amino-acid polypeptide reads, in one-letter code: Cell division protein FtsQ (316 aa).

The disordered stretch occupies residues 1 to 34; that stretch reads MAKAARRTKSAPARRSPRRHARQTGATIRRPKRP. The Cytoplasmic segment spans residues 1–61; it reads MAKAARRTKS…HPLLKQMAKR (61 aa). Residues 62-80 form a helical membrane-spanning segment; sequence LLLILVIVGFLAGLWAARW. The Periplasmic portion of the chain corresponds to 81–316; it reads PQLLATKTGE…AADPLVSDRI (236 aa). The POTRA domain occupies 97–165; it reads FSVRHVEIVG…DTLVVDIVER (69 aa). The disordered stretch occupies residues 295 to 316; that stretch reads PEPVKKATKPAKAADPLVSDRI.

This sequence belongs to the FtsQ/DivIB family. FtsQ subfamily.

It is found in the cell inner membrane. Its function is as follows. Essential cell division protein. This Zymomonas mobilis subsp. mobilis (strain ATCC 31821 / ZM4 / CP4) protein is Cell division protein FtsQ.